The sequence spans 434 residues: Trigger factor (434 aa).

The PPIase FKBP-type domain maps to 160 to 245; that stretch reads GDKAKINFVG…LNEVQAANLP (86 aa).

This sequence belongs to the FKBP-type PPIase family. Tig subfamily.

It is found in the cytoplasm. It carries out the reaction [protein]-peptidylproline (omega=180) = [protein]-peptidylproline (omega=0). Functionally, involved in protein export. Acts as a chaperone by maintaining the newly synthesized protein in an open conformation. Functions as a peptidyl-prolyl cis-trans isomerase. The chain is Trigger factor from Shewanella woodyi (strain ATCC 51908 / MS32).